The sequence spans 253 residues: tRNA (guanine-N(1)-)-methyltransferase (253 aa).

Residues Gly110 and 130–135 contribute to the S-adenosyl-L-methionine site; that span reads IGDYIL.

The protein belongs to the RNA methyltransferase TrmD family. In terms of assembly, homodimer.

The protein localises to the cytoplasm. It carries out the reaction guanosine(37) in tRNA + S-adenosyl-L-methionine = N(1)-methylguanosine(37) in tRNA + S-adenosyl-L-homocysteine + H(+). In terms of biological role, specifically methylates guanosine-37 in various tRNAs. This Carboxydothermus hydrogenoformans (strain ATCC BAA-161 / DSM 6008 / Z-2901) protein is tRNA (guanine-N(1)-)-methyltransferase.